Consider the following 398-residue polypeptide: Alpha-(1,3)-fucosyltransferase 4 (398 aa).

The Cytoplasmic segment spans residues 1-15 (MRARWGRRGARRGGP). The chain crosses the membrane as a helical; Signal-anchor for type II membrane protein span at residues 16-40 (GLPGTHLALLAASLLSSSVAIYVCW). Residues 41 to 398 (KQLPPLPWAS…VPNLAGWFQQ (358 aa)) are Lumenal-facing. 3 N-linked (GlcNAc...) asparagine glycosylation sites follow: N84, N183, and N311.

The protein belongs to the glycosyltransferase 10 family.

Its subcellular location is the golgi apparatus. The protein localises to the golgi stack membrane. It carries out the reaction a beta-D-galactosyl-(1-&gt;4)-N-acetyl-beta-D-glucosaminyl derivative + GDP-beta-L-fucose = a beta-D-galactosyl-(1-&gt;4)-[alpha-L-fucosyl-(1-&gt;3)]-N-acetyl-beta-D-glucosaminyl derivative + GDP + H(+). The enzyme catalyses an N-acetyl-alpha-neuraminyl-(2-&gt;3)-beta-D-galactosyl-(1-&gt;4)-N-acetyl-beta-D-glucosaminyl derivative + GDP-beta-L-fucose = an alpha-Neu5Ac-(2-&gt;3)-beta-D-Gal-(1-&gt;4)-[alpha-L-Fuc-(1-&gt;3)]-beta-D-GlcNAc derivative + GDP + H(+). The catalysed reaction is an alpha-Neu5Ac-(2-&gt;3)-beta-D-Gal-(1-&gt;4)-beta-D-GlcNAc-(1-&gt;3)-beta-D-Gal-(1-&gt;4)-beta-D-GlcNAc derivative + GDP-beta-L-fucose = an alpha-Neu5Ac-(2-&gt;3)-beta-D-Gal-(1-&gt;4)-beta-D-GlcNAc-(1-&gt;3)-beta-D-Gal-(1-&gt;4)-[alpha-L-Fuc-(1-&gt;3)]-beta-D-GlcNAc derivative + GDP + H(+). It catalyses the reaction an alpha-Neu5Ac-(2-&gt;3)-beta-D-Gal-(1-&gt;4)-beta-D-GlcNAc6S derivative + GDP-beta-L-fucose = an alpha-Neu5Ac-(2-&gt;3)-beta-D-Gal-(1-&gt;4)-[alpha-L-Fuc-(1-&gt;3)]-beta-D-GlcNAc6S derivative + GDP + H(+). It participates in protein modification; protein glycosylation. Catalyzes alpha(1-&gt;3) linkage of fucosyl moiety transferred from GDP-beta-L-fucose to N-acetyl glucosamine (GlcNAc) within type 2 lactosamine (LacNAc, Gal-beta(1-&gt;4)GlcNAc) glycan attached to N- or O-linked glycoproteins. Robustly fucosylates nonsialylated distal LacNAc unit of the polylactosamine chain to form Lewis X antigen (CD15), a glycan determinant known to mediate important cellular functions in development and immunity. Fucosylates with lower efficiency sialylated LacNAc acceptors to form sialyl Lewis X and 6-sulfo sialyl Lewis X determinants that serve as recognition epitopes for C-type lectins. Together with FUT7 contributes to SELE, SELL and SELP selectin ligand biosynthesis and selectin-dependent lymphocyte homing, leukocyte migration and blood leukocyte homeostasis. In a cell type specific manner, may also fucosylate the internal LacNAc unit of the polylactosamine chain to form VIM-2 antigen that serves as recognition epitope for SELE. The polypeptide is Alpha-(1,3)-fucosyltransferase 4 (FUT4) (Bos taurus (Bovine)).